The primary structure comprises 124 residues: Large ribosomal subunit protein bL12 (124 aa).

This sequence belongs to the bacterial ribosomal protein bL12 family. As to quaternary structure, homodimer. Part of the ribosomal stalk of the 50S ribosomal subunit. Forms a multimeric L10(L12)X complex, where L10 forms an elongated spine to which 2 to 4 L12 dimers bind in a sequential fashion. Binds GTP-bound translation factors.

Its function is as follows. Forms part of the ribosomal stalk which helps the ribosome interact with GTP-bound translation factors. Is thus essential for accurate translation. This Brucella anthropi (strain ATCC 49188 / DSM 6882 / CCUG 24695 / JCM 21032 / LMG 3331 / NBRC 15819 / NCTC 12168 / Alc 37) (Ochrobactrum anthropi) protein is Large ribosomal subunit protein bL12.